The primary structure comprises 280 residues: Urease accessory protein UreD 1 (280 aa).

The protein belongs to the UreD family. In terms of assembly, ureD, UreF and UreG form a complex that acts as a GTP-hydrolysis-dependent molecular chaperone, activating the urease apoprotein by helping to assemble the nickel containing metallocenter of UreC. The UreE protein probably delivers the nickel.

It localises to the cytoplasm. Its function is as follows. Required for maturation of urease via the functional incorporation of the urease nickel metallocenter. The sequence is that of Urease accessory protein UreD 1 from Brucella abortus biovar 1 (strain 9-941).